The sequence spans 384 residues: Spermidine/putrescine import ATP-binding protein PotA (384 aa).

Residues 6–238 form the ABC transporter domain; that stretch reads IAFQNVSKVF…PINHFVATFI (233 aa). 40–47 provides a ligand contact to ATP; it reads GASGSGKS.

This sequence belongs to the ABC transporter superfamily. Spermidine/putrescine importer (TC 3.A.1.11.1) family. In terms of assembly, the complex is composed of two ATP-binding proteins (PotA), two transmembrane proteins (PotB and PotC) and a solute-binding protein (PotD).

Its subcellular location is the cell membrane. The catalysed reaction is ATP + H2O + polyamine-[polyamine-binding protein]Side 1 = ADP + phosphate + polyamineSide 2 + [polyamine-binding protein]Side 1.. In terms of biological role, part of the ABC transporter complex PotABCD involved in spermidine/putrescine import. Responsible for energy coupling to the transport system. The protein is Spermidine/putrescine import ATP-binding protein PotA of Streptococcus thermophilus (strain ATCC BAA-250 / LMG 18311).